Here is a 188-residue protein sequence, read N- to C-terminus: Putative lipoprotein LprB (188 aa).

Residues 1–27 (MRCDVRALALAARGLIELMIVIPMVAG) form the signal peptide. Cys-28 carries the N-palmitoyl cysteine lipid modification. Cys-28 carries the S-diacylglycerol cysteine lipid modification.

The protein resides in the cell membrane. This is Putative lipoprotein LprB (lprB) from Mycobacterium leprae (strain TN).